We begin with the raw amino-acid sequence, 269 residues long: uncharacterized protein (269 aa).

103–110 (GIFTMGKS) is an ATP binding site.

This is an uncharacterized protein from Mycoplasma pneumoniae (strain ATCC 29342 / M129 / Subtype 1) (Mycoplasmoides pneumoniae).